Reading from the N-terminus, the 177-residue chain is Large ribosomal subunit protein uL6 (177 aa).

The protein belongs to the universal ribosomal protein uL6 family. As to quaternary structure, part of the 50S ribosomal subunit.

In terms of biological role, this protein binds to the 23S rRNA, and is important in its secondary structure. It is located near the subunit interface in the base of the L7/L12 stalk, and near the tRNA binding site of the peptidyltransferase center. In Ruegeria pomeroyi (strain ATCC 700808 / DSM 15171 / DSS-3) (Silicibacter pomeroyi), this protein is Large ribosomal subunit protein uL6.